A 175-amino-acid polypeptide reads, in one-letter code: Nudix hydrolase 25 (175 aa).

In terms of domain architecture, Nudix hydrolase spans 7-155; the sequence is GYRPNVGVCL…KRPTYEEVIK (149 aa). Mn(2+) is bound by residues glycine 40, glutamate 55, and glutamate 59. Residues 40-61 carry the Nudix box motif; that stretch reads GGIEDGEDPKSAAMRELQEETG.

This sequence belongs to the Nudix hydrolase family. Mn(2+) is required as a cofactor.

It catalyses the reaction P(1),P(4)-bis(5'-guanosyl) tetraphosphate + H2O = GMP + GTP + 2 H(+). In terms of biological role, mediates the hydrolysis of diadenosine 5',5''-P(1)P(4) tetraphosphate (Ap(4)A), a signaling molecule involved in regulation of DNA replication and repair. This Arabidopsis thaliana (Mouse-ear cress) protein is Nudix hydrolase 25.